The primary structure comprises 134 residues: Large ribosomal subunit protein uL22 (134 aa).

This sequence belongs to the universal ribosomal protein uL22 family. As to quaternary structure, part of the 50S ribosomal subunit.

This protein binds specifically to 23S rRNA; its binding is stimulated by other ribosomal proteins, e.g. L4, L17, and L20. It is important during the early stages of 50S assembly. It makes multiple contacts with different domains of the 23S rRNA in the assembled 50S subunit and ribosome. Its function is as follows. The globular domain of the protein is located near the polypeptide exit tunnel on the outside of the subunit, while an extended beta-hairpin is found that lines the wall of the exit tunnel in the center of the 70S ribosome. This Rhodococcus erythropolis (strain PR4 / NBRC 100887) protein is Large ribosomal subunit protein uL22.